We begin with the raw amino-acid sequence, 376 residues long: Fructose-1,6-bisphosphate aldolase/phosphatase (376 aa).

Catalysis depends on aspartate 11, which acts as the Proton acceptor; for FBP phosphatase activity. Residues aspartate 11, histidine 18, aspartate 49, and aspartate 50 each coordinate Mg(2+). Histidine 18 lines the beta-D-fructose 1,6-bisphosphate pocket. Histidine 18 is a dihydroxyacetone phosphate binding site. Residue tyrosine 87 coordinates beta-D-fructose 1,6-bisphosphate. A Mg(2+)-binding site is contributed by glutamine 91. Residue 100–101 (GN) participates in beta-D-fructose 1,6-bisphosphate binding. Aspartate 128 serves as a coordination point for Mg(2+). Lysine 129 serves as a coordination point for beta-D-fructose 1,6-bisphosphate. Lysine 129 is a binding site for dihydroxyacetone phosphate. Catalysis depends on tyrosine 224, which acts as the Proton donor/acceptor; for FBP aldolase activity. The Mg(2+) site is built by lysine 227, aspartate 228, and aspartate 229. Catalysis depends on lysine 227, which acts as the Schiff-base intermediate with DHAP; for FBP aldolase activity. Residues 237–238 (QK), arginine 261, and tyrosine 342 each bind beta-D-fructose 1,6-bisphosphate. Dihydroxyacetone phosphate is bound at residue arginine 261. The tract at residues 357–376 (MVPLKDSGPAGTGRAYEDPD) is disordered.

The protein belongs to the FBP aldolase/phosphatase family. Homooctamer; dimer of tetramers. Mg(2+) is required as a cofactor.

It catalyses the reaction beta-D-fructose 1,6-bisphosphate + H2O = beta-D-fructose 6-phosphate + phosphate. It carries out the reaction beta-D-fructose 1,6-bisphosphate = D-glyceraldehyde 3-phosphate + dihydroxyacetone phosphate. It functions in the pathway carbohydrate biosynthesis; gluconeogenesis. Functionally, catalyzes two subsequent steps in gluconeogenesis: the aldol condensation of dihydroxyacetone phosphate (DHAP) and glyceraldehyde-3-phosphate (GA3P) to fructose-1,6-bisphosphate (FBP), and the dephosphorylation of FBP to fructose-6-phosphate (F6P). The protein is Fructose-1,6-bisphosphate aldolase/phosphatase of Cenarchaeum symbiosum (strain A).